We begin with the raw amino-acid sequence, 314 residues long: tRNA-cytidine(32) 2-sulfurtransferase (314 aa).

A PP-loop motif motif is present at residues 49-54 (SGGKDS). Positions 124, 127, and 215 each coordinate [4Fe-4S] cluster.

It belongs to the TtcA family. As to quaternary structure, homodimer. Requires Mg(2+) as cofactor. The cofactor is [4Fe-4S] cluster.

The protein localises to the cytoplasm. The enzyme catalyses cytidine(32) in tRNA + S-sulfanyl-L-cysteinyl-[cysteine desulfurase] + AH2 + ATP = 2-thiocytidine(32) in tRNA + L-cysteinyl-[cysteine desulfurase] + A + AMP + diphosphate + H(+). The protein operates within tRNA modification. Functionally, catalyzes the ATP-dependent 2-thiolation of cytidine in position 32 of tRNA, to form 2-thiocytidine (s(2)C32). The sulfur atoms are provided by the cysteine/cysteine desulfurase (IscS) system. This Histophilus somni (strain 129Pt) (Haemophilus somnus) protein is tRNA-cytidine(32) 2-sulfurtransferase.